Reading from the N-terminus, the 1363-residue chain is Spike glycoprotein (1363 aa).

A signal peptide spans 1-13; it reads MFLILLISLPTAF. Topologically, residues 14–1307 are extracellular; sequence AVIGDLKCTT…GTYEYYVKWP (1294 aa). Residues 15 to 298 enclose the BetaCoV S1-NTD domain; that stretch reads VIGDLKCTTV…DFMSEIKCKT (284 aa). 5 disulfides stabilise this stretch: Cys21/Cys165, Cys160/Cys193, Cys172/Cys252, Cys286/Cys296, and Cys331/Cys356. N-linked (GlcNAc...) asparagine; by host glycans are attached at residues Asn59 and Asn133. N-linked (GlcNAc...) asparagine; by host glycosylation is present at Asn198. The 289-residue stretch at 329–617 folds into the BetaCoV S1-CTD domain; sequence PDCNIEAWLN…DVNSGTTCST (289 aa). N-linked (GlcNAc...) asparagine; by host glycosylation occurs at Asn359. Disulfide bonds link Cys374/Cys427 and Cys386/Cys615. N-linked (GlcNAc...) asparagine; by host glycosylation is found at Asn437, Asn649, Asn676, Asn696, Asn714, Asn739, and Asn788. 2 fusion peptide regions span residues 914–935 and 933–953; these read SAIE…VEAY and EAYN…VQSY. Residue Asn937 is glycosylated (N-linked (GlcNAc...) asparagine; by host). Cys938 and Cys949 are joined by a disulfide. Residues 1014 to 1064 are heptad repeat 1; it reads QKLIANAFNNALGAIQEGFDATNSALVKIQAVVNANAEALNNLLQQLSNRF. A coiled-coil region spans residues 1043-1087; it reads QAVVNANAEALNNLLQQLSNRFGAISSSLQEILSRLDALEAQAQI. N-linked (GlcNAc...) asparagine; by host glycosylation is found at Asn1194, Asn1224, Asn1234, Asn1253, Asn1267, and Asn1288. The interval 1258–1296 is heptad repeat 2; that stretch reads APDLSLDYINVTFLDLQDEMNRLQEAIKVLNQSYINLKD. Positions 1269 to 1297 form a coiled coil; it reads TFLDLQDEMNRLQEAIKVLNQSYINLKDI. A helical transmembrane segment spans residues 1308–1328; the sequence is WYVWLLIGFAGVAMLVLLFFI. Residues 1329–1363 lie on the Cytoplasmic side of the membrane; sequence CCCTGCGTSCFKKCGGCCDDYTGHQELVIKTSHDD. A KxHxx motif is present at residues 1359-1363; that stretch reads TSHDD.

The protein belongs to the betacoronaviruses spike protein family. Homotrimer; each monomer consists of a S1 and a S2 subunit. The resulting peplomers protrude from the virus surface as spikes. Specific enzymatic cleavages in vivo yield mature proteins. The precursor is processed into S1 and S2 by host cell furin or another cellular protease to yield the mature S1 and S2 proteins. Additionally, a second cleavage leads to the release of a fusion peptide after viral attachment to host cell receptor. Post-translationally, the cytoplasmic Cys-rich domain is palmitoylated. Spike glycoprotein is digested within host endosomes.

The protein localises to the virion membrane. Its subcellular location is the host endoplasmic reticulum-Golgi intermediate compartment membrane. It localises to the host cell membrane. Attaches the virion to the cell membrane by interacting with host receptor, initiating the infection. Functionally, mediates fusion of the virion and cellular membranes by acting as a class I viral fusion protein. Under the current model, the protein has at least three conformational states: pre-fusion native state, pre-hairpin intermediate state, and post-fusion hairpin state. During viral and target cell membrane fusion, the coiled coil regions (heptad repeats) assume a trimer-of-hairpins structure, positioning the fusion peptide in close proximity to the C-terminal region of the ectodomain. The formation of this structure appears to drive apposition and subsequent fusion of viral and target cell membranes. Its function is as follows. Acts as a viral fusion peptide which is unmasked following S2 cleavage occurring upon virus endocytosis. The chain is Spike glycoprotein from Bovine coronavirus (strain LSU-94LSS-051) (BCoV-LSU).